A 339-amino-acid polypeptide reads, in one-letter code: MIDKIKGHIADVESFNAKTKDEIEAFRIKYLGKKGILNDFFAEFKNVPNEQKKEFGQVINELKTAAQVKVNALKEDLENNQEEKGVYGDLSRPAEPVEIGARHPISIVKNQITEIFSNIGFNVSEGPEMEDDWHNFTALNLPEYHPARDMQDTFFIQTDPDILLRTHTSSVQVRYMEENKPPIRTISPGRVFRNEAISARSHCIFHQVEGLYIDKDVSFADMKQTILYFTEQLFGKSKIRLRPSYFPFTEPSAEVDVYWGLETETDYRITKGTGWLEIMGCGMVDPNVLRNCNIDPKEYSGFAFGMGIERIAMLLYQIEDIRMFYENDLRFLEQFKSAL.

Mg(2+) is bound at residue Glu-250.

It belongs to the class-II aminoacyl-tRNA synthetase family. Phe-tRNA synthetase alpha subunit type 1 subfamily. Tetramer of two alpha and two beta subunits. The cofactor is Mg(2+).

It localises to the cytoplasm. It catalyses the reaction tRNA(Phe) + L-phenylalanine + ATP = L-phenylalanyl-tRNA(Phe) + AMP + diphosphate + H(+). This is Phenylalanine--tRNA ligase alpha subunit from Christiangramia forsetii (strain DSM 17595 / CGMCC 1.15422 / KT0803) (Gramella forsetii).